Consider the following 285-residue polypeptide: 1,4-dihydroxy-2-naphthoyl-CoA synthase (285 aa).

Substrate is bound by residues Arg-45, Ser-84–Gln-88, Tyr-97, Tyr-129–Gly-133, Thr-155, Ser-161, Tyr-258, and Lys-273. Residue Gln-154–Gly-156 coordinates hydrogencarbonate.

It belongs to the enoyl-CoA hydratase/isomerase family. MenB subfamily. Hydrogencarbonate serves as cofactor.

The catalysed reaction is 2-succinylbenzoyl-CoA + H(+) = 1,4-dihydroxy-2-naphthoyl-CoA + H2O. The protein operates within quinol/quinone metabolism; 1,4-dihydroxy-2-naphthoate biosynthesis; 1,4-dihydroxy-2-naphthoate from chorismate: step 6/7. Its pathway is quinol/quinone metabolism; menaquinone biosynthesis. Functionally, converts o-succinylbenzoyl-CoA (OSB-CoA) to 1,4-dihydroxy-2-naphthoyl-CoA (DHNA-CoA). This chain is 1,4-dihydroxy-2-naphthoyl-CoA synthase, found in Haemophilus influenzae (strain ATCC 51907 / DSM 11121 / KW20 / Rd).